The sequence spans 332 residues: UPF0194 membrane protein YbhG (332 aa).

Residues 1 to 16 form the signal peptide; it reads MMKKPVVIGLAVVVLA. The stretch at 108–209 forms a coiled coil; that stretch reads EEIAQAAAAV…LNLQDSTLIA (102 aa).

Belongs to the UPF0194 family.

Its subcellular location is the periplasm. This chain is UPF0194 membrane protein YbhG, found in Shigella boydii serotype 4 (strain Sb227).